The primary structure comprises 750 residues: Photosystem I P700 chlorophyll a apoprotein A1 (750 aa).

8 consecutive transmembrane segments (helical) span residues 70–93 (VFSAHFGQLSIIFLWLSGMYFHGA), 156–179 (LYCTAIGALIFASLMLFAGWFHYH), 195–219 (LNHHLAGLLGLGSLSWAGHQIHVSL), 291–309 (IAHHHLAIAILFLIAGHMY), 346–369 (WHAQLSLNLAMLGSTTIVVAHHMY), 385–411 (LSLFTHHMWIGGFLIVGAAAHAAIFMV), 433–455 (AIISHLNWVCIFLGFHSFGLYIH), and 531–549 (FLVHHIHAFTIHVTVLILL). 2 residues coordinate [4Fe-4S] cluster: C573 and C582. 2 helical membrane-spanning segments follow: residues 589–610 (HVFLGLFWMYNSISVVIFHFSW) and 664–686 (LSAYGLFFLGAHFVWAFSLMFLF). H675 is a binding site for chlorophyll a'. Residues M683 and Y691 each contribute to the chlorophyll a site. W692 is a phylloquinone binding site. The chain crosses the membrane as a helical span at residues 724 to 744 (AVGVTHYLLGGIATTWAFFLA).

It belongs to the PsaA/PsaB family. The PsaA/B heterodimer binds the P700 chlorophyll special pair and subsequent electron acceptors. PSI consists of a core antenna complex that captures photons, and an electron transfer chain that converts photonic excitation into a charge separation. The eukaryotic PSI reaction center is composed of at least 11 subunits. P700 is a chlorophyll a/chlorophyll a' dimer, A0 is one or more chlorophyll a, A1 is one or both phylloquinones and FX is a shared 4Fe-4S iron-sulfur center. is required as a cofactor.

The protein resides in the plastid. Its subcellular location is the chloroplast thylakoid membrane. The catalysed reaction is reduced [plastocyanin] + hnu + oxidized [2Fe-2S]-[ferredoxin] = oxidized [plastocyanin] + reduced [2Fe-2S]-[ferredoxin]. Functionally, psaA and PsaB bind P700, the primary electron donor of photosystem I (PSI), as well as the electron acceptors A0, A1 and FX. PSI is a plastocyanin-ferredoxin oxidoreductase, converting photonic excitation into a charge separation, which transfers an electron from the donor P700 chlorophyll pair to the spectroscopically characterized acceptors A0, A1, FX, FA and FB in turn. Oxidized P700 is reduced on the lumenal side of the thylakoid membrane by plastocyanin. The sequence is that of Photosystem I P700 chlorophyll a apoprotein A1 from Saccharum hybrid (Sugarcane).